Here is a 128-residue protein sequence, read N- to C-terminus: Small ribosomal subunit protein uS9 (128 aa).

The protein belongs to the universal ribosomal protein uS9 family.

This is Small ribosomal subunit protein uS9 from Amoebophilus asiaticus (strain 5a2).